A 291-amino-acid chain; its full sequence is 4-hydroxy-tetrahydrodipicolinate synthase (291 aa).

Pyruvate is bound at residue Thr45. Tyr131 functions as the Proton donor/acceptor in the catalytic mechanism. Lys159 functions as the Schiff-base intermediate with substrate in the catalytic mechanism. Ile202 is a binding site for pyruvate.

The protein belongs to the DapA family. As to quaternary structure, homotetramer; dimer of dimers.

The protein resides in the cytoplasm. The enzyme catalyses L-aspartate 4-semialdehyde + pyruvate = (2S,4S)-4-hydroxy-2,3,4,5-tetrahydrodipicolinate + H2O + H(+). Its pathway is amino-acid biosynthesis; L-lysine biosynthesis via DAP pathway; (S)-tetrahydrodipicolinate from L-aspartate: step 3/4. In terms of biological role, catalyzes the condensation of (S)-aspartate-beta-semialdehyde [(S)-ASA] and pyruvate to 4-hydroxy-tetrahydrodipicolinate (HTPA). The polypeptide is 4-hydroxy-tetrahydrodipicolinate synthase (Methanosarcina acetivorans (strain ATCC 35395 / DSM 2834 / JCM 12185 / C2A)).